A 49-amino-acid chain; its full sequence is Large ribosomal subunit protein bL32 (49 aa).

The interval 25 to 49 (AKPVKDKDGTYKLPHHINPTTGEYK) is disordered.

It belongs to the bacterial ribosomal protein bL32 family.

This Sulfurimonas denitrificans (strain ATCC 33889 / DSM 1251) (Thiomicrospira denitrificans (strain ATCC 33889 / DSM 1251)) protein is Large ribosomal subunit protein bL32.